A 208-amino-acid polypeptide reads, in one-letter code: Superoxide dismutase [Mn] (208 aa).

The Mn(2+) site is built by His27, His81, Asp168, and His172.

The protein belongs to the iron/manganese superoxide dismutase family. In terms of assembly, homodimer. Mn(2+) serves as cofactor.

The catalysed reaction is 2 superoxide + 2 H(+) = H2O2 + O2. Functionally, destroys superoxide anion radicals which are normally produced within the cells and which are toxic to biological systems. This is Superoxide dismutase [Mn] (sodA) from Buchnera aphidicola subsp. Baizongia pistaciae (strain Bp).